The primary structure comprises 2924 residues: Probable polyketide synthase 6 (2924 aa).

A Ketosynthase family 3 (KS3) domain is found at 11–442; sequence EKGVAIVGIG…GSNCCLLISE (432 aa). Catalysis depends on for beta-ketoacyl synthase activity residues Cys-181, His-323, and His-362. The acyl/malonyl transferase stretch occupies residues 635–668; the sequence is GVNPSFILGHSLGEISASYCSGMIDLDTFCYTVY. The active-site For acyl/malonyl transferase activity is Ser-645. An N-terminal hotdog fold region spans residues 925 to 1047; it reads IDHLGLSNSY…SNFQLLDHGN (123 aa). A PKS/mFAS DH domain is found at 925-1210; it reads IDHLGLSNSY…CKSLIPIKDS (286 aa). The active-site Proton acceptor; for dehydratase activity is the His-959. The C-terminal hotdog fold stretch occupies residues 1064–1210; that stretch reads NLSKLTKNEL…CKSLIPIKDS (147 aa). Asp-1122 serves as the catalytic Proton donor; for dehydratase activity. Residues 2431-2508 form the Carrier domain; that stretch reads TGNKNIDELF…ISIKMILNSL (78 aa). At Ser-2468 the chain carries O-(pantetheine 4'-phosphoryl)serine. A helical transmembrane segment spans residues 2551–2571; that stretch reads KIILLTGTTGFLGGFLLFNML.

Pantetheine 4'-phosphate is required as a cofactor.

The protein resides in the membrane. In terms of biological role, probable polyketide synthase. The protein is Probable polyketide synthase 6 (pks6) of Dictyostelium discoideum (Social amoeba).